The sequence spans 315 residues: MTSTSTPAVVIAGPTASGKSGLAVRIAREFGGVVINADSMQVTDALPLLTARPAPGDMALAPHRLYAVLPPTELCSAARWRDMAAMEMAAAWQAGMLPILTGGTGLYLKAVMEGLSPIPEIPESIRAEARTLLAEMGNAAFHNRLAKHDPLMAERLDSGNSQRLARAWEVVTATGRSLAEWQDEPREGAVEARWFSLVLDPERPRLYAQCESRFRAMVTAGALDEVRDFEALRLPPDLPIQKALGRRELAAHLAGETDLDTAIAAACQATRNYAKRQGTWFRHQMMASLTASEQLSESLIATIFLKIRQHLLTAP.

Residue 13 to 20 (GPTASGKS) coordinates ATP. 15–20 (TASGKS) is a binding site for substrate. Interaction with substrate tRNA regions lie at residues 38–41 (DSMQ) and 162–166 (QRLAR).

Belongs to the IPP transferase family. Monomer. Requires Mg(2+) as cofactor.

The catalysed reaction is adenosine(37) in tRNA + dimethylallyl diphosphate = N(6)-dimethylallyladenosine(37) in tRNA + diphosphate. Its function is as follows. Catalyzes the transfer of a dimethylallyl group onto the adenine at position 37 in tRNAs that read codons beginning with uridine, leading to the formation of N6-(dimethylallyl)adenosine (i(6)A). The polypeptide is tRNA dimethylallyltransferase (Paramagnetospirillum magneticum (strain ATCC 700264 / AMB-1) (Magnetospirillum magneticum)).